We begin with the raw amino-acid sequence, 110 residues long: Large ribosomal subunit protein uL22 (110 aa).

This sequence belongs to the universal ribosomal protein uL22 family. Part of the 50S ribosomal subunit.

Functionally, this protein binds specifically to 23S rRNA; its binding is stimulated by other ribosomal proteins, e.g. L4, L17, and L20. It is important during the early stages of 50S assembly. It makes multiple contacts with different domains of the 23S rRNA in the assembled 50S subunit and ribosome. Its function is as follows. The globular domain of the protein is located near the polypeptide exit tunnel on the outside of the subunit, while an extended beta-hairpin is found that lines the wall of the exit tunnel in the center of the 70S ribosome. The polypeptide is Large ribosomal subunit protein uL22 (Actinobacillus pleuropneumoniae serotype 5b (strain L20)).